The primary structure comprises 97 residues: Aspartyl/glutamyl-tRNA(Asn/Gln) amidotransferase subunit C (97 aa).

Belongs to the GatC family. Heterotrimer of A, B and C subunits.

The enzyme catalyses L-glutamyl-tRNA(Gln) + L-glutamine + ATP + H2O = L-glutaminyl-tRNA(Gln) + L-glutamate + ADP + phosphate + H(+). It carries out the reaction L-aspartyl-tRNA(Asn) + L-glutamine + ATP + H2O = L-asparaginyl-tRNA(Asn) + L-glutamate + ADP + phosphate + 2 H(+). Its function is as follows. Allows the formation of correctly charged Asn-tRNA(Asn) or Gln-tRNA(Gln) through the transamidation of misacylated Asp-tRNA(Asn) or Glu-tRNA(Gln) in organisms which lack either or both of asparaginyl-tRNA or glutaminyl-tRNA synthetases. The reaction takes place in the presence of glutamine and ATP through an activated phospho-Asp-tRNA(Asn) or phospho-Glu-tRNA(Gln). In Prochlorococcus marinus subsp. pastoris (strain CCMP1986 / NIES-2087 / MED4), this protein is Aspartyl/glutamyl-tRNA(Asn/Gln) amidotransferase subunit C.